Consider the following 219-residue polypeptide: Probable GTP-binding protein EngB (219 aa).

Residues 24-207 (VQPEIAFAGR…HELIESWLRP (184 aa)) form the EngB-type G domain. GTP contacts are provided by residues 32–39 (GRSNAGKS), 59–63 (GRTQH), 81–84 (DLPG), 148–151 (TKCD), and 186–188 (FSA). Residues Ser-39 and Thr-61 each coordinate Mg(2+).

Belongs to the TRAFAC class TrmE-Era-EngA-EngB-Septin-like GTPase superfamily. EngB GTPase family. The cofactor is Mg(2+).

In terms of biological role, necessary for normal cell division and for the maintenance of normal septation. This is Probable GTP-binding protein EngB from Burkholderia ambifaria (strain ATCC BAA-244 / DSM 16087 / CCUG 44356 / LMG 19182 / AMMD) (Burkholderia cepacia (strain AMMD)).